Reading from the N-terminus, the 358-residue chain is Stearoyl-CoA desaturase 2 (358 aa).

Over 1–71 (MPAHILQEIS…EGPPPKLEYV (71 aa)) the chain is Cytoplasmic. Residues 16 to 39 (TTTITAPPSGGQQNGGEKFEKSSH) form a disordered region. A helical membrane pass occupies residues 72-92 (WRNIILMALLHLGALYGITLV). Residue Asn74 participates in substrate binding. The Lumenal segment spans residues 93–96 (PSCK). A helical membrane pass occupies residues 97–117 (LYTCLFAYLYYVISALGITAG). Topologically, residues 118 to 216 (AHRLWSHRTY…EKLVMFQRRY (99 aa)) are cytoplasmic. Residues His119 and His124 each coordinate Fe cation. The Histidine box-1 signature appears at 119 to 124 (HRLWSH). Residues Asn147, Arg154, and Asp155 each coordinate substrate. Positions 156, 159, and 160 each coordinate Fe cation. Positions 156 to 160 (HRAHH) match the Histidine box-2 motif. 2 residues coordinate substrate: Arg187 and Lys188. Residues 217-236 (YKPGLLLMCFVLPTLVPWYC) traverse the membrane as a helical segment. The Lumenal portion of the chain corresponds to 237–240 (WGET). Residues 241–262 (FVNSLCVSTFLRYAVVLNATWL) traverse the membrane as a helical segment. Trp261 contacts substrate. Residues 263-358 (VNSAAHLYGY…RTGDGSCKSG (96 aa)) lie on the Cytoplasmic side of the membrane. Fe cation-binding residues include His268, His297, His300, and His301. Positions 297–301 (HNYHH) match the Histidine box-3 motif.

This sequence belongs to the fatty acid desaturase type 1 family. The cofactor is Fe(2+). In terms of tissue distribution, detected in brain and skin. Highly expressed in brain, and detected at low levels in heart, stomach, lung and testis. Detected both in dermis and epidermis.

The protein resides in the endoplasmic reticulum membrane. The protein localises to the microsome membrane. The enzyme catalyses octadecanoyl-CoA + 2 Fe(II)-[cytochrome b5] + O2 + 2 H(+) = (9Z)-octadecenoyl-CoA + 2 Fe(III)-[cytochrome b5] + 2 H2O. The catalysed reaction is hexadecanoyl-CoA + 2 Fe(II)-[cytochrome b5] + O2 + 2 H(+) = (9Z)-hexadecenoyl-CoA + 2 Fe(III)-[cytochrome b5] + 2 H2O. Its function is as follows. Stearoyl-CoA desaturase that utilizes O(2) and electrons from reduced cytochrome b5 to introduce the first double bond into saturated fatty acyl-CoA substrates. Catalyzes the insertion of a cis double bond at the delta-9 position into fatty acyl-CoA substrates including palmitoyl-CoA and stearoyl-CoA. Gives rise to a mixture of 16:1 and 18:1 unsaturated fatty acids. Contributes to the biosynthesis of membrane phospholipids, cholesterol esters and triglycerides, especially during embryonic development and in neonates. Important for normal permeability barrier function of the skin in neonates. The chain is Stearoyl-CoA desaturase 2 (Scd2) from Mus musculus (Mouse).